A 117-amino-acid polypeptide reads, in one-letter code: Cliotide T9 (117 aa).

Residues Met-1–Ala-25 form the signal peptide. The segment at residues Gly-26 to Asn-55 is a cross-link (cyclopeptide (Gly-Asn)). 3 disulfides stabilise this stretch: Cys-29/Cys-45, Cys-33/Cys-47, and Cys-38/Cys-52. Residues His-56–Pro-117 constitute a propeptide, removed in mature form.

In terms of processing, contains 3 disulfide bonds. This is a cyclic peptide. Expressed in seed but not in root, nodule, flower, stem, shoot, leaf and pod (at protein level).

Its function is as follows. Probably participates in a plant defense mechanism. This chain is Cliotide T9, found in Clitoria ternatea (Butterfly pea).